A 222-amino-acid chain; its full sequence is N-(5'-phosphoribosyl)anthranilate isomerase (222 aa).

The protein belongs to the TrpF family.

It catalyses the reaction N-(5-phospho-beta-D-ribosyl)anthranilate = 1-(2-carboxyphenylamino)-1-deoxy-D-ribulose 5-phosphate. It participates in amino-acid biosynthesis; L-tryptophan biosynthesis; L-tryptophan from chorismate: step 3/5. This chain is N-(5'-phosphoribosyl)anthranilate isomerase, found in Xanthomonas euvesicatoria pv. vesicatoria (strain 85-10) (Xanthomonas campestris pv. vesicatoria).